Consider the following 258-residue polypeptide: Indole-3-glycerol phosphate synthase (258 aa).

Belongs to the TrpC family.

The enzyme catalyses 1-(2-carboxyphenylamino)-1-deoxy-D-ribulose 5-phosphate + H(+) = (1S,2R)-1-C-(indol-3-yl)glycerol 3-phosphate + CO2 + H2O. It functions in the pathway amino-acid biosynthesis; L-tryptophan biosynthesis; L-tryptophan from chorismate: step 4/5. In Endomicrobium trichonymphae, this protein is Indole-3-glycerol phosphate synthase.